The primary structure comprises 289 residues: Phospholipase A1 (289 aa).

The N-terminal stretch at 1–20 (MRTGPGWLLAAAALPFFACA) is a signal peptide. Residues 21–52 (QEATIDKVHDTPAVRGSIIANMLQEHDNPFTL) lie on the Periplasmic side of the membrane. Residues 53-65 (YPYESNYLLYTYT) form a beta stranded membrane-spanning segment. At 66-84 (SDLNKKAIESYNWSDNANK) the chain is on the extracellular side. Residues 85–99 (DEVKFQLSLAFPLWR) traverse the membrane as a beta stranded segment. Residues 100–105 (GILGDN) lie on the Periplasmic side of the membrane. Residues 106-118 (SLLGASYTQRSWW) form a beta stranded membrane-spanning segment. At 119–128 (QLSNTGESAP) the chain is on the extracellular side. Serine 126 contacts Ca(2+). Residues 129-148 (FRETNYEPQLFLGFATDYSV) form a beta stranded membrane-spanning segment. Residues 149–150 (GD) lie on the Periplasmic side of the membrane. A beta stranded membrane pass occupies residues 151–164 (WTLRDAEFGYNHQS). Histidine 162 serves as the catalytic Proton acceptor. Serine 164 functions as the Nucleophile in the catalytic mechanism. Residues 165-173 (NGRSDPTSR) are Extracellular-facing. Residues arginine 167 and serine 172 each contribute to the Ca(2+) site. Residues 174-186 (SWNRLYSRLMAQN) form a beta stranded membrane-spanning segment. At 187 to 188 (GN) the chain is on the periplasmic side. The beta stranded transmembrane segment at 189–198 (WLVEVKPWYV) threads the bilayer. The Extracellular portion of the chain corresponds to 199–216 (IGDTSDNKNITKYMGYYQ). Aspartate 204 is a Ca(2+) binding site. A beta stranded transmembrane segment spans residues 217–223 (LKIGYQL). Over 224-225 (GE) the chain is Periplasmic. Residues 226–234 (AVLSAKGQY) form a beta stranded membrane-spanning segment. At 235–241 (NWNTGYG) the chain is on the extracellular side. A beta stranded transmembrane segment spans residues 242 to 250 (GAELGVSYP). Topologically, residues 251–255 (ITKHV) are periplasmic. The beta stranded transmembrane segment at 256-265 (RFYTQVYSGY) threads the bilayer. Over 266-274 (GESLIDYDF) the chain is Extracellular. A beta stranded membrane pass occupies residues 275-286 (NQTRVGMGVMLN). Residues 287–289 (DLF) are Periplasmic-facing.

Belongs to the phospholipase A1 family. Homodimer; dimerization is reversible, and the dimeric form is the active one. The cofactor is Ca(2+).

The protein localises to the cell outer membrane. It catalyses the reaction a 1,2-diacyl-sn-glycero-3-phosphocholine + H2O = a 2-acyl-sn-glycero-3-phosphocholine + a fatty acid + H(+). The catalysed reaction is a 1,2-diacyl-sn-glycero-3-phosphocholine + H2O = a 1-acyl-sn-glycero-3-phosphocholine + a fatty acid + H(+). Its function is as follows. Hydrolysis of phosphatidylcholine with phospholipase A2 (EC 3.1.1.4) and phospholipase A1 (EC 3.1.1.32) activities. In Proteus vulgaris, this protein is Phospholipase A1 (pldA).